We begin with the raw amino-acid sequence, 815 residues long: Cell division control protein 53 (815 aa).

The interval 9 to 280 (DDLEATWNFI…WDDHTKKPLS (272 aa)) is required for interaction with SKP1/CBF3D and F-box protein. The required for interaction with CDC34/UBC3 stretch occupies residues 448–748 (KKATKPEVAS…IEKELNTERQ (301 aa)). The 62-residue stretch at 746 to 807 (ERQIFLEACI…QKGYLQRGDD (62 aa)) folds into the Cullin neddylation domain. K760 is covalently cross-linked (Glycyl lysine isopeptide (Lys-Gly) (interchain with G-Cter in NEDD8)).

Belongs to the cullin family. In terms of assembly, component of multiple SCF (SKP1-CUL1-F-box) E3 ubiquitin-protein ligase complexes formed of CUL1, SKP1/HRT1, RBX1 and a variable F-box domain-containing protein as substrate-specific adapter. Component of the SCF(CDC4) complex containing CDC4. Component of the SCF(MET30) complex containing MET30. Component of the SCF(GRR1) complex containing GRR1. Component of the probable SCF(DIA2) complex containing DIA2. Component of the probable SCF(YDR131C) complex containing YDR131C. Component of the probable SCF(YDR306C) complex containing YDR306C. Component of the probable SCF(YLR224W) complex containing YLR224W. Component of the probable SCF(YJL149W) complex containing YJL149W. Component of the probable SCF(YNL311C) complex containing YNL311C. Component of the probable SCF(MDM30) complex containing MDM30. Component of the probable SCF(UFO1) complex containing UFO1. Component of the probable SCF(HRT3) complex containing HRT3. Component of the probable SCF(YBR280C) complex containing YBR280C. Component of the probable SCF(YBR352W) complex containing YBR352W. Interacts with DCN1, YBR280C, YLR224W and YLR352W. The unneddylated form interacts with LAG2/CAND1 and the interaction mediates the exchange of the F-box substrate-specific subunit. Post-translationally, neddylated; enhancing the ubiquitin-ligase activity.

The protein localises to the cytoplasm. It localises to the nucleus. Functionally, core component of multiple cullin-RING-based SCF (SKP1-CUL1-F-box) E3 ubiquitin-protein ligase complexes which mediate the ubiquitination and subsequent proteasomal degradation of target proteins. As a scaffold protein may contribute to catalysis through positioning of the substrate and the ubiquitin-conjugating enzyme. The SCF complex associates with CDC34 as the E2 ubiquitin-conjugating enzyme. The functional specificity of the SCF complex depends on the type of F-box protein. SCF(CDC4) controls the G1-to-S phase transition; it directs ubiquitination of the phosphorylated CDK inhibitor SIC1 and of CDC6. SCF(CDC4) directs ubiquitination of GCN4. SCF(GRR1) directs ubiquitination of phosphorylated CLN1, CLN2 and GIC2. SCF(MET30) directs ubiquitination of MET4. SCF(DIA2) is specifically involved in the pheromone induced degradation of phosphorylated TEC1. SCF(MDM30) seems to direct ubiquitination of FZ01. Involved in the regulation of methionine biosynthesis genes. The chain is Cell division control protein 53 (CDC53) from Saccharomyces cerevisiae (strain ATCC 204508 / S288c) (Baker's yeast).